A 425-amino-acid chain; its full sequence is Glutamyl-tRNA reductase (425 aa).

Residues 49 to 52, Ser-107, 112 to 114, and Gln-118 each bind substrate; these read TCNR and EPQ. Cys-50 acts as the Nucleophile in catalysis. 187-192 is a binding site for NADP(+); sequence GAGETI.

Belongs to the glutamyl-tRNA reductase family. As to quaternary structure, homodimer.

It carries out the reaction (S)-4-amino-5-oxopentanoate + tRNA(Glu) + NADP(+) = L-glutamyl-tRNA(Glu) + NADPH + H(+). The protein operates within porphyrin-containing compound metabolism; protoporphyrin-IX biosynthesis; 5-aminolevulinate from L-glutamyl-tRNA(Glu): step 1/2. Its function is as follows. Catalyzes the NADPH-dependent reduction of glutamyl-tRNA(Glu) to glutamate 1-semialdehyde (GSA). The chain is Glutamyl-tRNA reductase from Pseudomonas putida (strain GB-1).